A 728-amino-acid polypeptide reads, in one-letter code: NF-kappa-B inhibitor zeta (728 aa).

A disordered region spans residues Gly-45–Arg-107. Residues Ser-53–Glu-82 show a composition bias toward low complexity. A compositionally biased stretch (basic and acidic residues) spans Ser-83–Val-96. Residues Arg-107–Asn-129 form the OCA domain. Positions Lys-163–Arg-178 match the Nuclear localization signal motif. Composition is skewed to polar residues over residues Pro-241–Asp-250 and Gln-268–Ser-288. Positions Pro-241–Leu-334 are disordered. The segment covering Gln-303 to Pro-315 has biased composition (low complexity). Over residues Leu-316–Tyr-330 the composition is skewed to polar residues. The required for transcriptional activity stretch occupies residues Lys-329 to Ser-403. The interaction with NFKB1/p50 stretch occupies residues Met-414–Tyr-728. ANK repeat units follow at residues Asp-453–Met-482, Asn-489–Thr-518, Trp-522–Gln-551, Asp-561–Pro-589, Val-591–Ala-617, Ser-622–Phe-651, and Asn-658–Thr-691.

Interacts with NFKB1/p50. Interacts with RELA. Interacts with AKIRIN2. As to expression, expressed in kidney, liver, lung and heart. Expressed at very low levels in skeletal muscle, spleen and brain.

Its subcellular location is the nucleus. Involved in regulation of NF-kappa-B transcription factor complexes. Inhibits NF-kappa-B activity without affecting its nuclear translocation upon stimulation. Inhibits DNA-binding of RELA and NFKB1/p50, and of the NF-kappa-B p65-p50 heterodimer and the NF-kappa-B p50-p50 homodimer. Also seems to activate NF-kappa-B-mediated transcription. In vitro, upon association with NFKB1/p50 has transcriptional activation activity and, together with NFKB1/p50 and RELA, is recruited to LCN2 promoters. Promotes transcription of LCN2 and DEFB4. Is recruited to IL-6 promoters and activates IL-6 but decreases TNF-alpha production in response to LPS. Seems to be involved in the induction of inflammatory genes activated through TLR/IL-1 receptor signaling. Involved in the induction of T helper 17 cells (Th17) differentiation upon recognition of antigen by T cell antigen receptor (TCR). The protein is NF-kappa-B inhibitor zeta (Nfkbiz) of Mus musculus (Mouse).